Consider the following 961-residue polypeptide: Exportin-T (961 aa).

This sequence belongs to the exportin family.

Its subcellular location is the cytoplasm. The protein resides in the nucleus. In terms of biological role, mediates the nuclear export of aminoacylated tRNAs. The protein is Exportin-T (xpot) of Danio rerio (Zebrafish).